The primary structure comprises 463 residues: Proton-coupled folate transporter (463 aa).

Topologically, residues 1–27 (MVSPDDSPEIRDRPRPRRCLLPASVTV) are cytoplasmic. The helical transmembrane segment at 28–46 (EPVIFLSMFALALQGPLAT) threads the bilayer. At 47–86 (QYLWDRLSADIGFNGTRTVGCAMNGSKSAGPEQQEVETLT) the chain is on the extracellular side. N60 and N70 each carry an N-linked (GlcNAc...) asparagine glycan. A disulfide bond links C67 and C302. The chain crosses the membrane as a helical span at residues 87-112 (AHWSLYINLGGFLVGLFSVMLLGPWS). At 113 to 116 (DKVG) the chain is on the cytoplasmic side. A helical membrane pass occupies residues 117–139 (RRPVLMLPCIGLALQAAVYLLVM). Over 140–144 (YQELH) the chain is Extracellular. The chain crosses the membrane as a helical span at residues 145 to 158 (VGYFLIGRFISGIS). The Cytoplasmic segment spans residues 159-181 (GDFNMILAGCFAYIADVSDRQSR). H(+)-binding residues include D160 and E189. Residues 182–207 (TFRVAVLEACLGIAGMVASIIGGHWR) traverse the membrane as a helical segment. At 208–212 (KAQGY) the chain is on the extracellular side. Residues 213–231 (INPFWLVFAVNLFTALYVY) traverse the membrane as a helical segment. The Cytoplasmic portion of the chain corresponds to 232-270 (FCVEESVKDKKPARLFTHRHYQSFFRLFTVQGENNRRRK). A helical transmembrane segment spans residues 271 to 293 (LFLYSLALLVVVTVHMGAKNLFV). A H(+)-binding site is contributed by H285. At 294–306 (LYELSYPLCWDSD) the chain is on the extracellular side. Residues 307–329 (LIGYGSAAEHLTYLSSLAGLRLF) form a helical membrane-spanning segment. Residues 330-335 (QLCLAD) are Cytoplasmic-facing. The chain crosses the membrane as a helical span at residues 336–355 (SWVAEMGFISNISGLVVISL). The Extracellular segment spans residues 356-359 (ASTT). A helical transmembrane segment spans residues 360 to 380 (PIMFTGYGLRFFAMATTPVIR). Topologically, residues 381–392 (SKLSKMVEEGEQ) are cytoplasmic. The chain crosses the membrane as a helical span at residues 393–418 (GALFSSVACVEGLSFLLATGLFNSLY). Residues 419-426 (PATLHFMK) are Extracellular-facing. Residues 427–445 (GFPFLLGALLLLIPAGIIG) traverse the membrane as a helical segment. The Cytoplasmic segment spans residues 446 to 463 (LIEVCEQKPMYSQFSEIS).

The protein belongs to the major facilitator superfamily. SLC46A family. As to quaternary structure, monomer.

The protein resides in the cell membrane. It is found in the apical cell membrane. Its subcellular location is the basolateral cell membrane. The protein localises to the endosome membrane. It localises to the cytoplasm. The catalysed reaction is folate(in) + H(+)(in) = folate(out) + H(+)(out). The enzyme catalyses (6S)-5-methyl-5,6,7,8-tetrahydrofolate(in) + H(+)(in) = (6S)-5-methyl-5,6,7,8-tetrahydrofolate(out) + H(+)(out). It carries out the reaction methotrexate(in) + H(+)(in) = methotrexate(out) + H(+)(out). It catalyses the reaction pemetrexed(in) + H(+)(in) = pemetrexed(out) + H(+)(out). Its function is as follows. Proton-coupled folate symporter that mediates folate absorption using an H(+) gradient as a driving force. Involved in the intestinal absorption of folates at the brush-border membrane of the proximal jejunum, and the transport from blood to cerebrospinal fluid across the choroid plexus. Functions at acidic pH via alternate outward- and inward-open conformation states. Protonation of residues in the outward open state primes the protein for transport. Binding of folate promotes breaking of salt bridge network and subsequent closure of the extracellular gate, leading to the inward-open state and release of protons and folate. Also able to transport antifolate drugs, such as methotrexate and pemetrexed. Also acts as a lower-affinity, pH-independent heme carrier protein and constitutes the main importer of heme in the intestine. Imports heme in the retina and retinal pigment epithelium, in neurons of the hippocampus, in hepatocytes and in the renal epithelial cells. This chain is Proton-coupled folate transporter, found in Xenopus laevis (African clawed frog).